The sequence spans 94 residues: Mitochondrial import receptor subunit TOM9-1 (94 aa).

At 1 to 48 (MAPKKIGAGKGDSSILAKISNYDIVSQGRRAACDAVYVSKKLLKSTGK) the chain is on the cytoplasmic side. Residues 49-66 (AAWIAGTTFLILAVPLIL) form a helical membrane-spanning segment. Over 67-94 (ELEQDHRLGEIDFEQASLLGTPPVGAML) the chain is Mitochondrial intermembrane.

Belongs to the Tom22 family. Forms part of the preprotein translocase complex of the outer mitochondrial membrane (TOM complex) which consists of at least 6 different proteins (TOM5, TOM6, TOM7, TOM20, TOM22/TOM9 and TOM40). In terms of tissue distribution, expressed in roots, flowers, young cotyledons and leaves.

The protein resides in the mitochondrion outer membrane. Central component of the receptor complex responsible for the recognition and translocation of cytosolically synthesized mitochondrial preproteins. Together with TOM20 functions as the transit peptide receptor at the surface of the mitochondrion outer membrane and facilitates the movement of preproteins into the translocation pore. The sequence is that of Mitochondrial import receptor subunit TOM9-1 (TOM9-1) from Arabidopsis thaliana (Mouse-ear cress).